The primary structure comprises 662 residues: DCC-interacting protein 13-beta (662 aa).

Residues 1-428 (MPAVDKLLLE…NSDIEDDNIV (428 aa)) form a required for RAB5A binding region. A BAR domain is found at 3 to 268 (AVDKLLLEEA…ESVYTPDIDV (266 aa)). Residues 277-375 (LIQKTGYLNL…WICAVNNISR (99 aa)) enclose the PH domain. Positions 486 to 635 (SLLQQMFIVR…LMLSVPLTND (150 aa)) constitute a PID domain. The disordered stretch occupies residues 642–662 (NDQADDTGGSPSENRGAESEA).

As to quaternary structure, homodimer. Homotetramer. Binds RAB5A/Rab5 through an N-terminal domain. This interaction is essential for its recruitment to endosomal membranes as well as its role in cell proliferation. Binds subunits of the NuRD/MeCP1 complex. Interacts with FSHR; interaction is independent of follicle stimulating hormone stimulation. Interacts with APPL1; the interaction is decreased by adiponectin in a time-dependent manner. Forms a complex comprising APPL1, RUVBL2, CTNNB1, HDAC1 and HDAC2; interaction reduces interaction between CTNNB1, HDAC1, HDAC2 and RUVBL2 leading to the decrease of deacetylase activity of this complex; affects the recruitment of repressive complexes to the Wnt target genes. Interacts (via BAR domain) with TBC1D1; interaction is dependent of TBC1D1 phosphorylation at 'Ser-235'; interaction diminishes the phosphorylation of TBC1D1 at 'Thr-596', resulting in inhibition of SLC2A4 translocation and glucose uptake. Interacts with ANXA2; targets APPL2 to endosomes and acting in parallel to RAB5A. Interacts with RAB31 (in GTP-bound form); interaction contributes to or enhances recruitment of APPL2 to the phagosomes; interaction enhances Fc-gamma receptor-mediated phagocytosis through PI3K/Akt signaling in macrophages. Interacts with PIK3R1; forms a complex with PIK3R1 and APPL1. Interacts (via BAR domain) with ADIPOR1; hinders the accessibility of APPL1 to ADIPOR1; negatively regulates adiponectin signaling; ADIPOQ dissociates this interaction and facilitates the recruitment of APPL1 to ADIPOR1. Interacts (via BAR domain) with ADIPOR2; ADIPOQ dissociates this interaction. In terms of tissue distribution, expressed in insulin-target tissues including skeletal muscle, liver, fat, and brain. Highly expressed in kidney and pancreas. Abundantly expressed in the ventromedial hypothalamus (VMH), barely detectable in the arcuate nucleus (ARC) and paraventricular nucleus (PVN) of the hypothalamus. Also expressed in pancreatic beta-cells.

The protein resides in the early endosome membrane. It is found in the nucleus. Its subcellular location is the cell membrane. The protein localises to the endosome membrane. It localises to the cytoplasm. The protein resides in the cytoplasmic vesicle. It is found in the phagosome. Its subcellular location is the cell projection. The protein localises to the ruffle. It localises to the ruffle membrane. The protein resides in the phagosome membrane. In terms of biological role, multifunctional adapter protein that binds to various membrane receptors, nuclear factors and signaling proteins to regulate many processes, such as cell proliferation, immune response, endosomal trafficking and cell metabolism. Regulates signaling pathway leading to cell proliferation through interaction with RAB5A and subunits of the NuRD/MeCP1 complex. Plays a role in immune response by modulating phagocytosis, inflammatory and innate immune responses. In macrophages, enhances Fc-gamma receptor-mediated phagocytosis through interaction with RAB31 leading to activation of PI3K/Akt signaling. In response to LPS, modulates inflammatory responses by playing a key role on the regulation of TLR4 signaling and in the nuclear translocation of RELA/NF-kappa-B p65 and the secretion of pro- and anti-inflammatory cytokines. Also functions as a negative regulator of innate immune response via inhibition of AKT1 signaling pathway by forming a complex with APPL1 and PIK3R1. Plays a role in endosomal trafficking of TGFBR1 from the endosomes to the nucleus. Plays a role in cell metabolism by regulating adiponectin and insulin signaling pathways and adaptative thermogenesis. In muscle, negatively regulates adiponectin-simulated glucose uptake and fatty acid oxidation by inhibiting adiponectin signaling pathway through APPL1 sequestration thereby antagonizing APPL1 action. In muscles, negatively regulates insulin-induced plasma membrane recruitment of GLUT4 and glucose uptake through interaction with TBC1D1. Plays a role in cold and diet-induced adaptive thermogenesis by activating ventromedial hypothalamus (VMH) neurons throught AMPK inhibition which enhances sympathetic outflow to subcutaneous white adipose tissue (sWAT), sWAT beiging and cold tolerance. Also plays a role in other signaling pathways namely Wnt/beta-catenin, HGF and glucocorticoid receptor signaling. Positive regulator of beta-catenin/TCF-dependent transcription through direct interaction with RUVBL2/reptin resulting in the relief of RUVBL2-mediated repression of beta-catenin/TCF target genes by modulating the interactions within the beta-catenin-reptin-HDAC complex. May affect adult neurogenesis in hippocampus and olfactory system via regulating the sensitivity of glucocorticoid receptor. Required for fibroblast migration through HGF cell signaling. This Mus musculus (Mouse) protein is DCC-interacting protein 13-beta.